The primary structure comprises 880 residues: 3-isopropylmalate dehydratase large subunit gloJ (880 aa).

Residues cysteine 457, cysteine 520, and cysteine 523 each contribute to the [4Fe-4S] cluster site.

It belongs to the aconitase/IPM isomerase family. LeuC type 2 subfamily. It depends on [4Fe-4S] cluster as a cofactor.

It carries out the reaction (2R,3S)-3-isopropylmalate = (2S)-2-isopropylmalate. Its pathway is mycotoxin biosynthesis. 3-isopropylmalate dehydratase large subunit; part of the gene cluster that mediates the biosynthesis of pneumocandins, lipohexapeptides of the echinocandin family that prevent fungal cell wall formation by non-competitive inhibition of beta-1,3-glucan synthase. The 10,12-dimethylmyristoyl side chain is synthesized by the reducing polyketide synthase gloL/GLPKS4. The thioesterase gloN/GLHYD exclusively interacts with gloL/GLPKS4 to maintain turnover of the polyketide side chain. The 10R,12S-dimethylmyristic acid is then transferred to the first thiolation domain of the nonribosomal peptide synthetase gloA/GLNRPS4 by the acyl-AMP ligase gloD/GLligase, followed by its acylation to L-ornithine to trigger elongation of the cyclic hexapeptide. L-ornithine, 4R-hydroxyl-L-proline (generated from L-proline by the dioxygenase gloF/GLOXY2), 3S-hydroxyl-L-homotyrosine (generated by gloG/GLHtyB, gloH/GLHtyA, gloI/GLHtyC, gloJ/GLHtyD and hydroxylated at C-3 by the dioxygenase gloM/GLOXY1), 3R-hydroxyl-L-glutamine (generated from L-glutamine probably by the dioxygenase gloE/GLOXY3) and 3S-hydroxyl-L-proline (generated from L-proline by the dioxygenase gloF/GLOXY2 to yield pneumocandin B0), or 3S-hydroxyl-4S-methyl-L-proline (generated from L-leucine by the dioxygenase gloC/GLOXY4 to yield pneumocandin A0) are sequentially added to the growing chain. The last C domain of gloA/GLNRPS4 is proposed to be responsible for cyclization by condensation to form the peptide bond between L-ornithine and 3S-hydroxyl-4S-methyl-L-proline (for pneumocandin A0) or 3S-hydroxyl-L-proline (for pneumocandin B0). Finally, the subsequent C-4 hydroxylation of 3S-hydroxyl-L-homotyrosine and L-ornithine dihydroxylation at C-4 and C-5 are performed by the cytochrome P450 monooxygenases gloP/GLP450-1 and gloO/GLP450-2, respectively. This is 3-isopropylmalate dehydratase large subunit gloJ from Glarea lozoyensis (strain ATCC 20868 / MF5171).